The chain runs to 206 residues: Small ribosomal subunit protein uS4 (206 aa).

The region spanning 96-156 (CRLDNVVYRM…EKAKNQLRIA (61 aa)) is the S4 RNA-binding domain.

It belongs to the universal ribosomal protein uS4 family. Part of the 30S ribosomal subunit. Contacts protein S5. The interaction surface between S4 and S5 is involved in control of translational fidelity.

Functionally, one of the primary rRNA binding proteins, it binds directly to 16S rRNA where it nucleates assembly of the body of the 30S subunit. Its function is as follows. With S5 and S12 plays an important role in translational accuracy. In Azotobacter vinelandii (strain DJ / ATCC BAA-1303), this protein is Small ribosomal subunit protein uS4.